An 807-amino-acid polypeptide reads, in one-letter code: Serine/threonine-protein kinase B-raf (807 aa).

Low complexity-rich tracts occupy residues 1 to 15 and 110 to 128; these read MAAL…GASL and SVSS…SSSL. Disordered stretches follow at residues 1–36 and 104–128; these read MAAL…YAGS and GNGT…SSSL. The RBD domain occupies 155 to 227; sequence PIVRVFLPNK…TGEELHVEVL (73 aa). A Phorbol-ester/DAG-type zinc finger spans residues 234 to 280; sequence THNFVRKTFFTLAFCDFCRKLLFQGFRCQTCGYKFHQRCSTEVPLMC. Residues histidine 235, cysteine 248, cysteine 251, cysteine 261, cysteine 264, histidine 269, cysteine 272, and cysteine 280 each contribute to the Zn(2+) site. A compositionally biased stretch (polar residues) spans 303-313; that stretch reads EETTLGETTPA. Disordered stretches follow at residues 303–372 and 434–494; these read EETT…VHIN and STAG…EIPD. The span at 314-328 shows a compositional bias: low complexity; the sequence is SGSYPSVPPSDSVGP. 2 stretches are compositionally biased toward basic and acidic residues: residues 348-363 and 463-487; these read PADE…RDRS and QRER…RDSS. A Protein kinase domain is found at 497 to 757; that stretch reads ITVGQRIGSG…PQILASIELL (261 aa). ATP is bound by residues 503–511 and lysine 523; that span reads IGSGSFGTV. The active-site Proton acceptor is the aspartate 616. Residue serine 790 is modified to Phosphoserine; by MAPK1. Threonine 793 is subject to Phosphothreonine; by MAPK1.

This sequence belongs to the protein kinase superfamily. TKL Ser/Thr protein kinase family. RAF subfamily. It depends on Zn(2+) as a cofactor. Post-translationally, phosphorylated. In terms of tissue distribution, expressed preferentially in neural tissue.

It is found in the nucleus. Its subcellular location is the cytoplasm. It localises to the cell membrane. The catalysed reaction is L-seryl-[protein] + ATP = O-phospho-L-seryl-[protein] + ADP + H(+). It carries out the reaction L-threonyl-[protein] + ATP = O-phospho-L-threonyl-[protein] + ADP + H(+). With respect to regulation, in quiescent cells, maintained in an inactive state via an intramolecular interaction between the protein kinase and N-terminal domains. Following mitogen-mediated cell activation, binds via its RGB domain to active HRAS (GTP-bound) which releases the inhibitory intramolecular interaction between the two domains. This allows the MAP2K1-mediated dimerization of KSR1 or KSR2, and BRAF which activates BRAF. Its function is as follows. Protein kinase involved in the activation of the MAP signaling cascade. May play a role in transducing specific signals in neural cells. The chain is Serine/threonine-protein kinase B-raf from Coturnix japonica (Japanese quail).